The sequence spans 309 residues: 4-hydroxy-tetrahydrodipicolinate synthase (309 aa).

Thr-51 contacts pyruvate. Tyr-140 functions as the Proton donor/acceptor in the catalytic mechanism. Lys-168 acts as the Schiff-base intermediate with substrate in catalysis. Ile-209 is a pyruvate binding site.

It belongs to the DapA family. Homotetramer; dimer of dimers.

Its subcellular location is the cytoplasm. The catalysed reaction is L-aspartate 4-semialdehyde + pyruvate = (2S,4S)-4-hydroxy-2,3,4,5-tetrahydrodipicolinate + H2O + H(+). It functions in the pathway amino-acid biosynthesis; L-lysine biosynthesis via DAP pathway; (S)-tetrahydrodipicolinate from L-aspartate: step 3/4. Functionally, catalyzes the condensation of (S)-aspartate-beta-semialdehyde [(S)-ASA] and pyruvate to 4-hydroxy-tetrahydrodipicolinate (HTPA). The protein is 4-hydroxy-tetrahydrodipicolinate synthase of Streptococcus uberis (strain ATCC BAA-854 / 0140J).